The chain runs to 160 residues: Protein-export protein SecB (160 aa).

Belongs to the SecB family. Homotetramer, a dimer of dimers. One homotetramer interacts with 1 SecA dimer.

The protein resides in the cytoplasm. Functionally, one of the proteins required for the normal export of preproteins out of the cell cytoplasm. It is a molecular chaperone that binds to a subset of precursor proteins, maintaining them in a translocation-competent state. It also specifically binds to its receptor SecA. The polypeptide is Protein-export protein SecB (Beijerinckia indica subsp. indica (strain ATCC 9039 / DSM 1715 / NCIMB 8712)).